The following is a 51-amino-acid chain: MAAKKSFKIKQKLAKAKNQNRPLPQWFRLKTNNTIRYNAKRRHWRRTKMGI.

Positions 1 to 15 (MAAKKSFKIKQKLAK) are enriched in basic residues. Residues 1 to 21 (MAAKKSFKIKQKLAKAKNQNR) form a disordered region.

It belongs to the eukaryotic ribosomal protein eL39 family. In terms of assembly, interacts with YIH1.

In Eremothecium gossypii (strain ATCC 10895 / CBS 109.51 / FGSC 9923 / NRRL Y-1056) (Yeast), this protein is Large ribosomal subunit protein eL39 (RPL39).